We begin with the raw amino-acid sequence, 224 residues long: Ribonuclease HII (224 aa).

Residues 7 to 217 (STIMGIDEAG…SNAVIADCLQ (211 aa)) enclose the RNase H type-2 domain. A divalent metal cation-binding residues include aspartate 13, glutamate 14, and aspartate 111.

Belongs to the RNase HII family. Mn(2+) is required as a cofactor. Mg(2+) serves as cofactor.

The protein localises to the cytoplasm. It catalyses the reaction Endonucleolytic cleavage to 5'-phosphomonoester.. Its function is as follows. Endonuclease that specifically degrades the RNA of RNA-DNA hybrids. The protein is Ribonuclease HII of Methanocella arvoryzae (strain DSM 22066 / NBRC 105507 / MRE50).